Here is an 883-residue protein sequence, read N- to C-terminus: Glutamate receptor 2 (883 aa).

Residues 1–21 (MQKIMHISVLLSPVLWGLIFG) form the signal peptide. The Extracellular portion of the chain corresponds to 22–543 (VSSNSIQIGG…GVFSFLDPLA (522 aa)). A disulfide bridge links Cys-78 with Cys-330. Residues Asn-256, Asn-370, Asn-406, and Asn-413 are each glycosylated (N-linked (GlcNAc...) asparagine). Residues Pro-499, Thr-501, and Arg-506 each contribute to the L-glutamate site. The chain crosses the membrane as a helical span at residues 544–564 (YEIWMCIVFAYIGVSVVLFLV). Over 565–591 (SRFSPYEWHTEEFEDGRETQSSESTNE) the chain is Cytoplasmic. The segment at residues 592–607 (FGIFNSLWFSLGAFMQ) is an intramembrane region (helical; Pore-forming). An intramembrane segment occupies 608–610 (QGC). A lipid anchor (S-palmitoyl cysteine) is attached at Cys-610. Residues 611 to 616 (DISPRS) lie on the Cytoplasmic side of the membrane. Residues 617–637 (LSGRIVGGVWWFFTLIIISSY) form a helical membrane-spanning segment. Topologically, residues 638-812 (TANLAAFLTV…EKTSALSLSN (175 aa)) are extracellular. The L-glutamate site is built by Ser-675 and Thr-676. Ser-683 bears the Phosphoserine; by PKC mark. The residue at position 717 (Ser-717) is a Phosphoserine; by PKG. Glu-726 lines the L-glutamate pocket. Cys-739 and Cys-794 are joined by a disulfide. A helical membrane pass occupies residues 813–833 (VAGVFYILVGGLGLAMLVALI). Over 834–883 (EFCYKSRAEAKRMKVAKNPQNINPSSSQNSQNFATYKEGYNVYGIESVKI) the chain is Cytoplasmic. The S-palmitoyl cysteine moiety is linked to residue Cys-836. Phosphoserine occurs at positions 860 and 863. The tract at residues 867–877 (ATYKEGYNVYG) is required for interaction with IQSEC1. Phosphotyrosine is present on Tyr-876. Ser-880 bears the Phosphoserine mark.

It belongs to the glutamate-gated ion channel (TC 1.A.10.1) family. GRIA2 subfamily. Homotetramer or heterotetramer of pore-forming glutamate receptor subunits. Tetramers may be formed by the dimerization of dimers. May interact with MPP4. Forms a ternary complex with GRIP1 and CSPG4. Interacts with ATAD1 in an ATP-dependent manner. ATAD1-catalyzed ATP hydrolysis disrupts binding to ATAD1 and to GRIP1 and leads to AMPAR complex disassembly. Interacts with GRIP2. Interacts with GRIP1. Interacts with NSF via its C-terminus. Interacts with CACNG2, PICK1 and GRIP2. Interacts with GRIA1 and SYNDIG1. Part of a complex containing GRIA2, NSF and NAPA and/or NAPB. Interacts with SNX27 (via PDZ domain); the interaction is required for recycling to the plasma membrane when endocytosed and prevent degradation in lysosomes. Interacts with LRFN1. Found in a complex with GRIA1, GRIA3, GRIA4, CNIH2, CNIH3, CACNG2, CACNG3, CACNG4, CACNG5, CACNG7 and CACNG8. Interacts with CACNG5. Interacts with OLFM2. Interacts with AP4B1, AP4E1 and AP4M1; probably indirect it mediates the somatodendritic localization of GRIA2 in neurons. Forms a complex with GRIP1, NSG1 and STX12; controls the intracellular fate of AMPAR and the endosomal sorting of the GRIA2 subunit toward recycling and membrane targeting. Interacts with IQSEC1; the interaction is required for ARF6 activation. Interacts (heterotetramer form) with CNIH2 and CNIH3; this interaction promotes expression at the plasma membrane and extensively modulates their gating properties by slowing deactivation and desensitization kinetics. Post-translationally, palmitoylated. Depalmitoylated upon L-glutamate stimulation. Cys-610 palmitoylation leads to Golgi retention and decreased cell surface expression. In contrast, Cys-836 palmitoylation does not affect cell surface expression but regulates stimulation-dependent endocytosis. In terms of processing, phosphorylation at Tyr-876 is required for interaction with IQSEC1 and ARF6 activation, which in turn triggers AMPAR internalization for persistent synaptic depression. Ubiquitinated by RNF167, leading to its degradation. Post-translationally, N-glycosylated. As to expression, detected in forebrain. Detected in dendrites of neuronal cells. Expressed in the pyramidal cell layers of CA1 and CA3 and in the granule cell layer of the dentate gyrus.

It localises to the cell membrane. Its subcellular location is the postsynaptic cell membrane. It is found in the postsynaptic density membrane. The enzyme catalyses Ca(2+)(in) = Ca(2+)(out). The catalysed reaction is Na(+)(in) = Na(+)(out). Ionotropic glutamate receptor that functions as a ligand-gated cation channel, gated by L-glutamate and glutamatergic agonists such as alpha-amino-3-hydroxy-5-methyl-4-isoxazolepropionic acid (AMPA), quisqualic acid, and kainic acid. L-glutamate acts as an excitatory neurotransmitter at many synapses in the central nervous system and plays an important role in fast excitatory synaptic transmission. Binding of the excitatory neurotransmitter L-glutamate induces a conformation change, leading to the opening of the cation channel, and thereby converts the chemical signal to an electrical impulse upon entry of monovalent and divalent cations such as sodium and calcium. The receptor then desensitizes rapidly and enters in a transient inactive state, characterized by the presence of bound agonist. In the presence of CACNG4 or CACNG7 or CACNG8, shows resensitization which is characterized by a delayed accumulation of current flux upon continued application of L-glutamate. Through complex formation with NSG1, GRIP1 and STX12 controls the intracellular fate of AMPAR and the endosomal sorting of the GRIA2 subunit toward recycling and membrane targeting. The polypeptide is Glutamate receptor 2 (Rattus norvegicus (Rat)).